The following is a 351-amino-acid chain: Putative glycosyltransferase 45 (351 aa).

This sequence belongs to the glycosyltransferase group 1 family.

The chain is Putative glycosyltransferase 45 (SIFV0045) from Sulfolobus islandicus filamentous virus (isolate Iceland/Hveragerdi) (SIFV).